We begin with the raw amino-acid sequence, 589 residues long: Zinc finger and BTB domain-containing protein 46 (589 aa).

A BTB domain is found at 31–99; it reads CDVCVVVEGK…MYSAHLALTS (69 aa). The disordered stretch occupies residues 173–330; it reads RRTSPANSSG…ASSSDSRGER (158 aa). A compositionally biased stretch (basic and acidic residues) spans 197-207; sequence GKEDQEPKADG. Residue lysine 229 forms a Glycyl lysine isopeptide (Lys-Gly) (interchain with G-Cter in SUMO2) linkage. At serine 234 the chain carries Phosphoserine. A compositionally biased stretch (polar residues) spans 305-325; it reads WPFSSRDSNADLSVTEASSSD. 2 consecutive C2H2-type zinc fingers follow at residues 418 to 436 and 446 to 468; these read FKCP…LKRH and YPCE…TLVH. The interval 512–589 is disordered; it reads PLDHGGGGGE…GPDKDFAWLS (78 aa). Residues 546–570 show a composition bias toward acidic residues; the sequence is EELGEDDEGLAPEDALLADDKDEED.

Sumoylated. Desumoylation by DESI1 reverses transcriptional repression activity.

The protein resides in the nucleus. Functions as a transcriptional repressor for PRDM1. The chain is Zinc finger and BTB domain-containing protein 46 (ZBTB46) from Homo sapiens (Human).